The following is a 240-amino-acid chain: Uridylate kinase (240 aa).

Residue 12–15 (KLSG) participates in ATP binding. An involved in allosteric activation by GTP region spans residues 20 to 25 (GKQGFG). Position 54 (G54) interacts with UMP. 2 residues coordinate ATP: G55 and R59. UMP is bound by residues D74 and 135–142 (TGNPYFST). N163, Y169, and D172 together coordinate ATP.

Belongs to the UMP kinase family. Homohexamer.

Its subcellular location is the cytoplasm. The catalysed reaction is UMP + ATP = UDP + ADP. It participates in pyrimidine metabolism; CTP biosynthesis via de novo pathway; UDP from UMP (UMPK route): step 1/1. Its activity is regulated as follows. Allosterically activated by GTP. Inhibited by UTP. In terms of biological role, catalyzes the reversible phosphorylation of UMP to UDP. The chain is Uridylate kinase from Geobacillus thermodenitrificans (strain NG80-2).